A 153-amino-acid chain; its full sequence is Small ribosomal subunit protein uS7c (153 aa).

Belongs to the universal ribosomal protein uS7 family. In terms of assembly, part of the 30S ribosomal subunit.

Its subcellular location is the plastid. Its function is as follows. One of the primary rRNA binding proteins, it binds directly to 16S rRNA where it nucleates assembly of the head domain of the 30S subunit. The sequence is that of Small ribosomal subunit protein uS7c (rps7) from Helicosporidium sp. subsp. Simulium jonesii (Green alga).